A 95-amino-acid chain; its full sequence is Protein TusB (95 aa).

It belongs to the DsrH/TusB family. In terms of assembly, heterohexamer, formed by a dimer of trimers. The hexameric TusBCD complex contains 2 copies each of TusB, TusC and TusD. The TusBCD complex interacts with TusE.

The protein resides in the cytoplasm. Its function is as follows. Part of a sulfur-relay system required for 2-thiolation of 5-methylaminomethyl-2-thiouridine (mnm(5)s(2)U) at tRNA wobble positions. This is Protein TusB from Erwinia tasmaniensis (strain DSM 17950 / CFBP 7177 / CIP 109463 / NCPPB 4357 / Et1/99).